A 212-amino-acid polypeptide reads, in one-letter code: MAETKEFKTLYNLFIDSYLQKLAQHSIPTNVTCAIHIGEVIGQFKNCALRITNKCMSNTRLSFTLMVESFIEVISLLPEKDRRAIAEEIGIDLNDVPSAVSKLEKNCNAYAEVNNIIDIQKLNIGECSAPPGQHMLLQIVNTGSAGANCGLQTILKSLNKIYVPPIIENRLPYYDPWFLVGVAIILVIFTVAICSIRRNLALKYRYGTFLYV.

Residues 1 to 175 (MAETKEFKTL…IIENRLPYYD (175 aa)) lie on the Virion surface side of the membrane. Disulfide bonds link Cys33-Cys55, Cys47-Cys127, and Cys107-Cys149. Residues 176–196 (PWFLVGVAIILVIFTVAICSI) form a helical membrane-spanning segment. Topologically, residues 197–212 (RRNLALKYRYGTFLYV) are intravirion.

This sequence belongs to the orthopoxvirus OPG053 family. Component of the entry fusion complex (EFC) composed of OPG053, OPG076, OPG086, OPG094, OPG095, OPG099, OPG107, OPG143, OPG104, OPG147 and OPG155. Except for OPG095 and OPG052, each of the EFC proteins is required for assembly or stability of the complex. Disulfid bonds are oxidized in the cytoplasm by OPG088 protein. Post-translationally, unglycosylated because produced in viral factories instead of the classic ER -Golgi route.

The protein resides in the virion membrane. In terms of biological role, component of the entry fusion complex (EFC), which consists of 11 proteins. During cell infection, this complex mediates entry of the virion core into the host cytoplasm by a two-step mechanism consisting of lipid mixing of the viral and cellular membranes and subsequent pore formation. The chain is EFC-associated protein OPG053 (OPG053) from Homo sapiens (Human).